A 527-amino-acid polypeptide reads, in one-letter code: Probable bifunctional methylthioribulose-1-phosphate dehydratase/enolase-phosphatase E1 (527 aa).

A methylthioribulose-1-phosphate dehydratase region spans residues 1–244 (MAAAAAPAVA…AIKLHQLGLD (244 aa)). C116 contacts substrate. Zn(2+)-binding residues include H134 and H136. E159 functions as the Proton donor/acceptor; for methylthioribulose-1-phosphate dehydratase activity in the catalytic mechanism. A Zn(2+)-binding site is contributed by H209. Residues 288–527 (IVLDIEGTTT…FKTINSLSEI (240 aa)) are enolase-phosphatase E1. Mg(2+) is bound by residues D291 and E293. Substrate contacts are provided by residues 426–427 (SS) and K460. Position 486 (D486) interacts with Mg(2+).

It in the N-terminal section; belongs to the aldolase class II family. MtnB subfamily. The protein in the C-terminal section; belongs to the HAD-like hydrolase superfamily. MasA/MtnC family. Zn(2+) is required as a cofactor. Requires Mg(2+) as cofactor.

The enzyme catalyses 5-(methylsulfanyl)-D-ribulose 1-phosphate = 5-methylsulfanyl-2,3-dioxopentyl phosphate + H2O. It carries out the reaction 5-methylsulfanyl-2,3-dioxopentyl phosphate + H2O = 1,2-dihydroxy-5-(methylsulfanyl)pent-1-en-3-one + phosphate. Its pathway is amino-acid biosynthesis; L-methionine biosynthesis via salvage pathway; L-methionine from S-methyl-5-thio-alpha-D-ribose 1-phosphate: step 2/6. It functions in the pathway amino-acid biosynthesis; L-methionine biosynthesis via salvage pathway; L-methionine from S-methyl-5-thio-alpha-D-ribose 1-phosphate: step 3/6. It participates in amino-acid biosynthesis; L-methionine biosynthesis via salvage pathway; L-methionine from S-methyl-5-thio-alpha-D-ribose 1-phosphate: step 4/6. This is Probable bifunctional methylthioribulose-1-phosphate dehydratase/enolase-phosphatase E1 from Ricinus communis (Castor bean).